A 149-amino-acid polypeptide reads, in one-letter code: 3-dehydroquinate dehydratase (149 aa).

Tyrosine 24 functions as the Proton acceptor in the catalytic mechanism. 3 residues coordinate substrate: asparagine 76, histidine 82, and aspartate 89. The Proton donor role is filled by histidine 102. Residues 103-104 and arginine 113 contribute to the substrate site; that span reads LS.

It belongs to the type-II 3-dehydroquinase family. As to quaternary structure, homododecamer.

The catalysed reaction is 3-dehydroquinate = 3-dehydroshikimate + H2O. It participates in metabolic intermediate biosynthesis; chorismate biosynthesis; chorismate from D-erythrose 4-phosphate and phosphoenolpyruvate: step 3/7. In terms of biological role, catalyzes a trans-dehydration via an enolate intermediate. The chain is 3-dehydroquinate dehydratase from Acinetobacter baylyi (strain ATCC 33305 / BD413 / ADP1).